A 203-amino-acid polypeptide reads, in one-letter code: 2-hydroxychromene-2-carboxylate isomerase (203 aa).

The active-site Nucleophile is the S11. S11 is a glutathione binding site. Residues K43, 53–54 (NR), and Y84 contribute to the substrate site. Glutathione is bound by residues V168 and 179–182 (WGND).

Belongs to the GST superfamily. NadH family. Requires glutathione as cofactor.

It catalyses the reaction 2-hydroxychromene-2-carboxylate = (3E)-4-(2-hydroxyphenyl)-2-oxobut-3-enoate. The protein operates within aromatic compound metabolism; naphthalene degradation. Its function is as follows. Involved in the naphthalene catabolic pathway. Catalyzes the reversible glutathione-dependent isomerization of 2-hydroxychromene-2-carboxylate (HCCA) to trans-O-hydroxybenzylidenepyruvate (THBPA). The protein is 2-hydroxychromene-2-carboxylate isomerase (nahD) of Pseudomonas putida (Arthrobacter siderocapsulatus).